The following is a 146-amino-acid chain: uncharacterized protein (146 aa).

This is an uncharacterized protein from Acanthamoeba polyphaga mimivirus (APMV).